We begin with the raw amino-acid sequence, 306 residues long: uncharacterized protein (306 aa).

Residues 1–6 (MRFRQL) lie on the Cytoplasmic side of the membrane. The chain crosses the membrane as a helical span at residues 7–27 (LPLFGALFALYIIWGSTYFVI). The 124-residue stretch at 18-141 (IIWGSTYFVI…GLAGIIMLNS (124 aa)) folds into the EamA 1 domain. The Periplasmic segment spans residues 28–36 (RIGVESWPP). The chain crosses the membrane as a helical span at residues 37–57 (LMMAGVRFLAAGILLLAFLLL). Over 58–67 (RGHKLPPLRP) the chain is Cytoplasmic. Residues 68–88 (LLNAALIGLLLLAVGNGMVTV) form a helical membrane-spanning segment. At 89–93 (AEHQN) the chain is on the periplasmic side. Residues 94-114 (VPSGIAAVVVATVPLFTLCFS) traverse the membrane as a helical segment. The Cytoplasmic portion of the chain corresponds to 115-125 (RLFGIKTRKLE). Residues 126–146 (WVGIAIGLAGIIMLNSGGNLS) form a helical membrane-spanning segment. The Periplasmic segment spans residues 147–148 (GN). Residues 149-169 (PWGAILILIGSISWAFGSVYG) form a helical membrane-spanning segment. The 126-residue stretch at 160–285 (ISWAFGSVYG…IVFAVVLVTL (126 aa)) folds into the EamA 2 domain. The Cytoplasmic portion of the chain corresponds to 170-173 (SRIT). Residues 174-194 (LPVGMMAGAIEMLAAGVVLMI) traverse the membrane as a helical segment. Residues 195–206 (ASMIAGEKLTAL) are Periplasmic-facing. Residues 207–227 (PSLSGFLAVGYLALFGSIIAI) form a helical membrane-spanning segment. Over 228–239 (NAYMYLIRNVSP) the chain is Cytoplasmic. Residues 240-260 (ALATSYAYVNPVVAVLLGTGL) traverse the membrane as a helical segment. Over 261–269 (GGETLSKIE) the chain is Periplasmic. Residues 270–290 (WLALGVIVFAVVLVTLGKYLF) form a helical membrane-spanning segment. Residues 291–306 (PAKPVVAPVIQDASSE) lie on the Cytoplasmic side of the membrane.

The protein belongs to the EamA transporter family.

The protein resides in the cell inner membrane. This is an uncharacterized protein from Escherichia coli O157:H7.